The sequence spans 140 residues: uncharacterized protein (140 aa).

The next 2 membrane-spanning stretches (helical) occupy residues 26 to 43 (YLDL…TGVI) and 64 to 86 (LLNF…NGVL).

It belongs to the bacteriophage holin family. Cp-1 holin subfamily.

It is found in the cell membrane. This is an uncharacterized protein from Bacillus subtilis (strain 168).